We begin with the raw amino-acid sequence, 236 residues long: Small ribosomal subunit protein uS2c (236 aa).

This sequence belongs to the universal ribosomal protein uS2 family.

It localises to the plastid. It is found in the chloroplast. The polypeptide is Small ribosomal subunit protein uS2c (rps2) (Aethionema grandiflorum (Persian stone-cress)).